Here is a 144-residue protein sequence, read N- to C-terminus: Large ribosomal subunit protein uL11 (144 aa).

This sequence belongs to the universal ribosomal protein uL11 family. Part of the ribosomal stalk of the 50S ribosomal subunit. Interacts with L10 and the large rRNA to form the base of the stalk. L10 forms an elongated spine to which L12 dimers bind in a sequential fashion forming a multimeric L10(L12)X complex. Post-translationally, one or more lysine residues are methylated.

In terms of biological role, forms part of the ribosomal stalk which helps the ribosome interact with GTP-bound translation factors. This Neisseria meningitidis serogroup C (strain 053442) protein is Large ribosomal subunit protein uL11.